A 616-amino-acid polypeptide reads, in one-letter code: Dihydroxy-acid dehydratase (616 aa).

A Mg(2+)-binding site is contributed by D81. C122 provides a ligand contact to [2Fe-2S] cluster. Mg(2+) contacts are provided by D123 and K124. K124 carries the N6-carboxylysine modification. Position 195 (C195) interacts with [2Fe-2S] cluster. Position 491 (E491) interacts with Mg(2+). The Proton acceptor role is filled by S517.

Belongs to the IlvD/Edd family. In terms of assembly, homodimer. It depends on [2Fe-2S] cluster as a cofactor. Mg(2+) serves as cofactor.

The enzyme catalyses (2R)-2,3-dihydroxy-3-methylbutanoate = 3-methyl-2-oxobutanoate + H2O. It catalyses the reaction (2R,3R)-2,3-dihydroxy-3-methylpentanoate = (S)-3-methyl-2-oxopentanoate + H2O. The protein operates within amino-acid biosynthesis; L-isoleucine biosynthesis; L-isoleucine from 2-oxobutanoate: step 3/4. It participates in amino-acid biosynthesis; L-valine biosynthesis; L-valine from pyruvate: step 3/4. Functions in the biosynthesis of branched-chain amino acids. Catalyzes the dehydration of (2R,3R)-2,3-dihydroxy-3-methylpentanoate (2,3-dihydroxy-3-methylvalerate) into 2-oxo-3-methylpentanoate (2-oxo-3-methylvalerate) and of (2R)-2,3-dihydroxy-3-methylbutanoate (2,3-dihydroxyisovalerate) into 2-oxo-3-methylbutanoate (2-oxoisovalerate), the penultimate precursor to L-isoleucine and L-valine, respectively. This is Dihydroxy-acid dehydratase from Azoarcus sp. (strain BH72).